Consider the following 437-residue polypeptide: Glycogen synthase (437 aa).

K15 serves as a coordination point for ADP-alpha-D-glucose.

It belongs to the glycosyltransferase 1 family. Bacterial/plant glycogen synthase subfamily.

It catalyses the reaction [(1-&gt;4)-alpha-D-glucosyl](n) + ADP-alpha-D-glucose = [(1-&gt;4)-alpha-D-glucosyl](n+1) + ADP + H(+). The protein operates within glycan biosynthesis; glycogen biosynthesis. Functionally, synthesizes alpha-1,4-glucan chains using ADP-glucose. In Thermus thermophilus (strain ATCC BAA-163 / DSM 7039 / HB27), this protein is Glycogen synthase.